The sequence spans 691 residues: DNA ligase (691 aa).

NAD(+) is bound by residues 41–45 (DAEYD), 90–91 (SL), and E130. K132 functions as the N6-AMP-lysine intermediate in the catalytic mechanism. 4 residues coordinate NAD(+): R153, E190, K307, and K331. Residues C425, C428, C443, and C449 each contribute to the Zn(2+) site. In terms of domain architecture, BRCT spans 610-691 (APQGVLAGKT…MHTLLEGHAR (82 aa)).

This sequence belongs to the NAD-dependent DNA ligase family. LigA subfamily. Mg(2+) is required as a cofactor. Requires Mn(2+) as cofactor.

It catalyses the reaction NAD(+) + (deoxyribonucleotide)n-3'-hydroxyl + 5'-phospho-(deoxyribonucleotide)m = (deoxyribonucleotide)n+m + AMP + beta-nicotinamide D-nucleotide.. Its function is as follows. DNA ligase that catalyzes the formation of phosphodiester linkages between 5'-phosphoryl and 3'-hydroxyl groups in double-stranded DNA using NAD as a coenzyme and as the energy source for the reaction. It is essential for DNA replication and repair of damaged DNA. This chain is DNA ligase, found in Burkholderia pseudomallei (strain 1106a).